The following is an 871-amino-acid chain: Rho guanine nucleotide exchange factor 26 (871 aa).

Disordered regions lie at residues 1–49 (MDGE…LLIT), 86–233 (AQRR…NPSV), and 288–310 (PLGH…SLRR). The residue at position 22 (S22) is a Phosphoserine. A compositionally biased stretch (pro residues) spans 136–156 (PAPPPPPVLRPPRTPNAPAPC). Residues 173 to 192 (PTANGLAANNDSPGSGSQSG) are compositionally biased toward polar residues. S392 is modified (phosphoserine). One can recognise a DH domain in the interval 439–623 (KRQEAIFEVI…SKLVRLCNEG (185 aa)). A PH domain is found at 655-782 (WLVKRGELTA…WITALGHSSG (128 aa)). An SH3 domain is found at 789 to 850 (TSLTQVEIVR…PMECAKEITC (62 aa)).

As to quaternary structure, interacts with ICAM1 and RHOG. Isoform 1 is broadly expressed, with highest levels in liver (at protein level). Certain mRNA species appear to be specifically expressed in prostate and liver.

It is found in the cell projection. The protein resides in the ruffle. Activates RhoG GTPase by promoting the exchange of GDP by GTP. Required for the formation of membrane ruffles during macropinocytosis. Required for the formation of cup-like structures during trans-endothelial migration of leukocytes. In case of Salmonella enterica infection, activated by SopB, which induces cytoskeleton rearrangements and promotes bacterial entry. This is Rho guanine nucleotide exchange factor 26 (ARHGEF26) from Homo sapiens (Human).